The chain runs to 348 residues: Phospho-2-dehydro-3-deoxyheptonate aldolase, Trp-sensitive (348 aa).

It belongs to the class-I DAHP synthase family.

The catalysed reaction is D-erythrose 4-phosphate + phosphoenolpyruvate + H2O = 7-phospho-2-dehydro-3-deoxy-D-arabino-heptonate + phosphate. It participates in metabolic intermediate biosynthesis; chorismate biosynthesis; chorismate from D-erythrose 4-phosphate and phosphoenolpyruvate: step 1/7. Stereospecific condensation of phosphoenolpyruvate (PEP) and D-erythrose-4-phosphate (E4P) giving rise to 3-deoxy-D-arabino-heptulosonate-7-phosphate (DAHP). The protein is Phospho-2-dehydro-3-deoxyheptonate aldolase, Trp-sensitive (aroH) of Salmonella typhi.